Reading from the N-terminus, the 329-residue chain is Beta-ketoacyl-[acyl-carrier-protein] synthase III (329 aa).

Active-site residues include C114 and H255. The tract at residues 256 to 260 (QANQR) is ACP-binding. The active site involves N285.

This sequence belongs to the thiolase-like superfamily. FabH family. Homodimer.

It is found in the cytoplasm. It carries out the reaction malonyl-[ACP] + acetyl-CoA + H(+) = 3-oxobutanoyl-[ACP] + CO2 + CoA. Its pathway is lipid metabolism; fatty acid biosynthesis. Its function is as follows. Catalyzes the condensation reaction of fatty acid synthesis by the addition to an acyl acceptor of two carbons from malonyl-ACP. Catalyzes the first condensation reaction which initiates fatty acid synthesis and may therefore play a role in governing the total rate of fatty acid production. Possesses both acetoacetyl-ACP synthase and acetyl transacylase activities. Its substrate specificity determines the biosynthesis of branched-chain and/or straight-chain of fatty acids. In Trichodesmium erythraeum (strain IMS101), this protein is Beta-ketoacyl-[acyl-carrier-protein] synthase III.